We begin with the raw amino-acid sequence, 5801 residues long: uncharacterized protein (5801 aa).

7 disordered regions span residues 1114–1136, 1827–1846, 2040–2109, 3351–3392, 5134–5168, 5478–5573, and 5600–5638; these read DDDN…NKKI, KDRS…SINN, NNGE…SPLF, EKSN…NNSG, DNNN…SESD, ISDP…EDII, and HDKD…ETPG. 5 stretches are compositionally biased toward low complexity: residues 1118–1134, 1831–1846, 2048–2096, 3353–3392, and 5135–5153; these read NNSN…NNNK, SSSS…SINN, QQLQ…QQQQ, SNNN…NNSG, and NNNN…NNNN. Over residues 5496–5573 the composition is skewed to acidic residues; it reads DNEEEEEDDD…EDEDEDEDII (78 aa). The segment covering 5617-5629 has biased composition (basic and acidic residues); sequence QQPEKPQQPEKPQ.

This is an uncharacterized protein from Dictyostelium discoideum (Social amoeba).